We begin with the raw amino-acid sequence, 298 residues long: dTDP-4-dehydrorhamnose reductase (298 aa).

Residues 10 to 12, 35 to 36, and 59 to 61 contribute to the NADH site; these read GQV, DL, and AYT. Residues 11 to 12, 35 to 36, 59 to 61, and Tyr-98 contribute to the NADPH site; these read QV, DL, and AYT. Position 100-101 (100-101) interacts with dTDP-beta-L-rhamnose; that stretch reads TD. Residues Tyr-124 and Lys-128 each contribute to the NADH site. Positions 124 and 128 each coordinate NADPH. Residue Tyr-124 is the Proton donor/acceptor of the active site. Position 149 (Trp-149) interacts with dTDP-beta-L-rhamnose.

It belongs to the dTDP-4-dehydrorhamnose reductase family. As to quaternary structure, homodimer. The cofactor is Mg(2+).

The catalysed reaction is dTDP-beta-L-rhamnose + NADP(+) = dTDP-4-dehydro-beta-L-rhamnose + NADPH + H(+). Its pathway is carbohydrate biosynthesis; dTDP-L-rhamnose biosynthesis. It functions in the pathway bacterial outer membrane biogenesis; LPS O-antigen biosynthesis. Its function is as follows. Involved in the biosynthesis of the dTDP-L-rhamnose which is an important component of lipopolysaccharide (LPS). Catalyzes the reduction of dTDP-6-deoxy-L-lyxo-4-hexulose to yield dTDP-L-rhamnose. The polypeptide is dTDP-4-dehydrorhamnose reductase (Burkholderia thailandensis (strain ATCC 700388 / DSM 13276 / CCUG 48851 / CIP 106301 / E264)).